The following is a 200-amino-acid chain: Signal peptidase complex catalytic subunit SEC11 (200 aa).

At 1 to 14 (MFAELAPYLSNPRQ) the chain is on the cytoplasmic side. Residues 15 to 33 (TLAQILNFALVLSTAFMGW) form a helical; Signal-anchor for type II membrane protein membrane-spanning segment. Over 34–200 (KALSVYTNSP…MGVMVMLQRE (167 aa)) the chain is Lumenal. Active-site charge relay system residues include S53 and H92. Positions 101–129 (GDGGNKSQRRLEREADKPSGPGLSSPLSH) are disordered. N105 is a glycosylation site (N-linked (GlcNAc...) asparagine). Residues 118–128 (PSGPGLSSPLS) are compositionally biased toward low complexity. Catalysis depends on D142, which acts as the Charge relay system. The segment at 186 to 197 (VLLGIMGVMVML) is C-terminal short (CTS) helix.

The protein belongs to the peptidase S26B family. In terms of assembly, component of the signal peptidase complex (SPC) composed of a catalytic subunit SEC11 and three accessory subunits SPC1, SPC2 and SPC3. The complex induces a local thinning of the ER membrane which is used to measure the length of the signal peptide (SP) h-region of protein substrates. This ensures the selectivity of the complex towards h-regions shorter than 18-20 amino acids. SPC associates with the translocon complex.

Its subcellular location is the endoplasmic reticulum membrane. The enzyme catalyses Cleavage of hydrophobic, N-terminal signal or leader sequences from secreted and periplasmic proteins.. Catalytic component of the signal peptidase complex (SPC) which catalyzes the cleavage of N-terminal signal sequences from nascent proteins as they are translocated into the lumen of the endoplasmic reticulum. Specifically cleaves N-terminal signal peptides that contain a hydrophobic alpha-helix (h-region) shorter than 18-20 amino acids. The polypeptide is Signal peptidase complex catalytic subunit SEC11 (SEC11) (Arthroderma otae (strain ATCC MYA-4605 / CBS 113480) (Microsporum canis)).